An 891-amino-acid chain; its full sequence is DNA mismatch repair protein MutS (891 aa).

632–639 (GPNMAGKS) provides a ligand contact to ATP.

This sequence belongs to the DNA mismatch repair MutS family.

Functionally, this protein is involved in the repair of mismatches in DNA. It is possible that it carries out the mismatch recognition step. This protein has a weak ATPase activity. The chain is DNA mismatch repair protein MutS from Rhodopirellula baltica (strain DSM 10527 / NCIMB 13988 / SH1).